The chain runs to 275 residues: Phosphate import ATP-binding protein PstB 1 (275 aa).

Positions 22–261 (FNVEGVKVYY…SPTEQMFNSP (240 aa)) constitute an ABC transporter domain. Residue 54–61 (GPSGCGKS) coordinates ATP.

Belongs to the ABC transporter superfamily. Phosphate importer (TC 3.A.1.7) family. In terms of assembly, the complex is composed of two ATP-binding proteins (PstB), two transmembrane proteins (PstC and PstA) and a solute-binding protein (PstS).

Its subcellular location is the cell inner membrane. It carries out the reaction phosphate(out) + ATP + H2O = ADP + 2 phosphate(in) + H(+). Its function is as follows. Part of the ABC transporter complex PstSACB involved in phosphate import. Responsible for energy coupling to the transport system. This Trichormus variabilis (strain ATCC 29413 / PCC 7937) (Anabaena variabilis) protein is Phosphate import ATP-binding protein PstB 1.